The primary structure comprises 236 residues: Baculoviral IAP repeat-containing protein 8 (236 aa).

The stretch at R7–L70 is one BIR repeat. Positions 39, 42, 59, and 66 each coordinate Zn(2+). The RING-type zinc finger occupies C189–S224.

Belongs to the IAP family. Binds to caspase-9.

It is found in the cytoplasm. Protects against apoptosis mediated by BAX. The chain is Baculoviral IAP repeat-containing protein 8 (BIRC8) from Pan troglodytes (Chimpanzee).